Consider the following 138-residue polypeptide: Small ribosomal subunit protein uS12 (138 aa).

Residues 1 to 20 are disordered; sequence MPTISQLINHGRSAKTSKSK. Asp-102 is subject to 3-methylthioaspartic acid. The tract at residues 116–138 is disordered; sequence DAAGVDKRKQGRSIYGTKKPKEN.

It belongs to the universal ribosomal protein uS12 family. As to quaternary structure, part of the 30S ribosomal subunit. Contacts proteins S8 and S17. May interact with IF1 in the 30S initiation complex.

In terms of biological role, with S4 and S5 plays an important role in translational accuracy. Interacts with and stabilizes bases of the 16S rRNA that are involved in tRNA selection in the A site and with the mRNA backbone. Located at the interface of the 30S and 50S subunits, it traverses the body of the 30S subunit contacting proteins on the other side and probably holding the rRNA structure together. The combined cluster of proteins S8, S12 and S17 appears to hold together the shoulder and platform of the 30S subunit. The protein is Small ribosomal subunit protein uS12 of Metamycoplasma arthritidis (strain 158L3-1) (Mycoplasma arthritidis).